The chain runs to 137 residues: Small ribosomal subunit protein uS12 (137 aa).

Residues 1 to 43 form a disordered region; it reads MPTINQLVRKGRVSKTKKSDSPALNKGYNSFKKRMTDQNAPQK.

It belongs to the universal ribosomal protein uS12 family. In terms of assembly, part of the 30S ribosomal subunit. Contacts proteins S8 and S17. May interact with IF1 in the 30S initiation complex.

In terms of biological role, with S4 and S5 plays an important role in translational accuracy. Interacts with and stabilizes bases of the 16S rRNA that are involved in tRNA selection in the A site and with the mRNA backbone. Located at the interface of the 30S and 50S subunits, it traverses the body of the 30S subunit contacting proteins on the other side and probably holding the rRNA structure together. The combined cluster of proteins S8, S12 and S17 appears to hold together the shoulder and platform of the 30S subunit. In Oceanobacillus iheyensis (strain DSM 14371 / CIP 107618 / JCM 11309 / KCTC 3954 / HTE831), this protein is Small ribosomal subunit protein uS12.